The following is a 452-amino-acid chain: UDP-N-acetylmuramoylalanine--D-glutamate ligase (452 aa).

An ATP-binding site is contributed by Gly-119 to Thr-125.

The protein belongs to the MurCDEF family.

It is found in the cytoplasm. The enzyme catalyses UDP-N-acetyl-alpha-D-muramoyl-L-alanine + D-glutamate + ATP = UDP-N-acetyl-alpha-D-muramoyl-L-alanyl-D-glutamate + ADP + phosphate + H(+). Its pathway is cell wall biogenesis; peptidoglycan biosynthesis. Cell wall formation. Catalyzes the addition of glutamate to the nucleotide precursor UDP-N-acetylmuramoyl-L-alanine (UMA). The protein is UDP-N-acetylmuramoylalanine--D-glutamate ligase of Streptococcus pyogenes serotype M5 (strain Manfredo).